A 459-amino-acid polypeptide reads, in one-letter code: uncharacterized protein (459 aa).

A B12-binding domain is found at 13–145 (TESAIKRVVG…DALSKGRELK (133 aa)). The 215-residue stretch at 188–402 (ADGVPFGVVM…MNWRKYTTID (215 aa)) folds into the Radical SAM core domain. Positions 202, 206, and 209 each coordinate [4Fe-4S] cluster.

The protein belongs to the methyltransferase superfamily. The cofactor is [4Fe-4S] cluster.

This is an uncharacterized protein from Pyrococcus horikoshii (strain ATCC 700860 / DSM 12428 / JCM 9974 / NBRC 100139 / OT-3).